The chain runs to 1724 residues: Protein mono-ADP-ribosyltransferase PARP4 (1724 aa).

The BRCT domain maps to 1–94 (MVMGIFANCI…RLLDVKNYDP (94 aa)). The Nuclear localization signal signature appears at 19-25 (PQQQKKK). The tract at residues 97 to 123 (PLDITPPPDQKASSSEVKTEGLCPDSA) is disordered. 2 positions are modified to phosphothreonine: threonine 101 and threonine 333. A PARP alpha-helical domain is found at 242–370 (SEQLQALLLE…ETNLSKPNPP (129 aa)). The region spanning 369 to 573 (PPSLAKYRAL…FSMPGDQIKD (205 aa)) is the PARP catalytic domain. The VIT domain maps to 607–735 (SSTKAGLQDA…KVLIKITYIT (129 aa)). Residues 876 to 1046 (EVIICLDCSS…KQIEDQMTRL (171 aa)) form the VWFA domain. A Phosphoserine modification is found at serine 1236. Positions 1237 to 1249 (KRKHRKIPFSKRK) match the Nuclear localization signal motif. Serine 1335 is subject to Phosphoserine. The tract at residues 1408-1452 (SAQSAPLQHPGGFTTRPSAGTFPELDSPQLHFSLPTDPDPIRGFG) is disordered. Asymmetric dimethylarginine is present on arginine 1476. Serine 1504 carries the phosphoserine modification. The tract at residues 1562 to 1724 (VCIQHWQDAV…LHRVLHYSQG (163 aa)) is interaction with the major vault protein.

It belongs to the ARTD/PARP family. Component of the vault ribonucleoprotein particle, at least composed of MVP, PARP4 and one or more vault RNAs (vRNAs). Interacts with TEP1. Widely expressed; the highest levels are in the kidney; also detected in heart, placenta, lung, liver, skeletal muscle, spleen, leukocytes and pancreas.

The protein localises to the cytoplasm. It is found in the nucleus. The protein resides in the cytoskeleton. It localises to the spindle. It catalyses the reaction L-aspartyl-[protein] + NAD(+) = 4-O-(ADP-D-ribosyl)-L-aspartyl-[protein] + nicotinamide. It carries out the reaction L-glutamyl-[protein] + NAD(+) = 5-O-(ADP-D-ribosyl)-L-glutamyl-[protein] + nicotinamide. Mono-ADP-ribosyltransferase that mediates mono-ADP-ribosylation of target proteins. This is Protein mono-ADP-ribosyltransferase PARP4 from Homo sapiens (Human).